The following is a 343-amino-acid chain: Anthranilate phosphoribosyltransferase (343 aa).

5-phospho-alpha-D-ribose 1-diphosphate contacts are provided by residues glycine 77, 80–81 (GD), threonine 85, 87–90 (NVST), 105–113 (KHGNRSSSG), and serine 117. Glycine 77 serves as a coordination point for anthranilate. Serine 89 contributes to the Mg(2+) binding site. Position 108 (asparagine 108) interacts with anthranilate. Anthranilate is bound at residue arginine 163. Aspartate 222 and glutamate 223 together coordinate Mg(2+).

Belongs to the anthranilate phosphoribosyltransferase family. In terms of assembly, homodimer. Mg(2+) is required as a cofactor.

The enzyme catalyses N-(5-phospho-beta-D-ribosyl)anthranilate + diphosphate = 5-phospho-alpha-D-ribose 1-diphosphate + anthranilate. The protein operates within amino-acid biosynthesis; L-tryptophan biosynthesis; L-tryptophan from chorismate: step 2/5. Functionally, catalyzes the transfer of the phosphoribosyl group of 5-phosphorylribose-1-pyrophosphate (PRPP) to anthranilate to yield N-(5'-phosphoribosyl)-anthranilate (PRA). This is Anthranilate phosphoribosyltransferase from Cenarchaeum symbiosum (strain A).